The primary structure comprises 134 residues: Acyl carrier protein, chloroplastic (134 aa).

Residues M1–C51 constitute a chloroplast transit peptide. Residues P55 to V130 form the Carrier domain. S90 carries the O-(pantetheine 4'-phosphoryl)serine modification.

Belongs to the acyl carrier protein (ACP) family. 4'-phosphopantetheine is transferred from CoA to a specific serine of apo-ACP by acpS. This modification is essential for activity because fatty acids are bound in thioester linkage to the sulfhydryl of the prosthetic group. In terms of tissue distribution, seed.

It localises to the plastid. It is found in the chloroplast. Its pathway is lipid metabolism; fatty acid biosynthesis. Its function is as follows. Carrier of the growing fatty acid chain in fatty acid biosynthesis. In Brassica napus (Rape), this protein is Acyl carrier protein, chloroplastic (ACL1.A1).